A 69-amino-acid chain; its full sequence is UPF0337 protein YjbJ (69 aa).

This sequence belongs to the UPF0337 (CsbD) family.

This Escherichia coli O6:H1 (strain CFT073 / ATCC 700928 / UPEC) protein is UPF0337 protein YjbJ (yjbJ).